The following is a 2323-amino-acid chain: C2 domain-containing protein 3 (2323 aa).

Disordered regions lie at residues 1–27, 193–215, 402–426, 444–509, 537–556, and 698–745; these read MKQR…SPST, RELR…SCRG, WNGL…DLND, SDVG…HTPA, PDSP…PPKP, and KLSS…TKKT. The segment covering 200–209 has biased composition (polar residues); that stretch reads ESSNTQSMIP. Ser453 is modified (phosphoserine). The segment covering 474–483 has biased composition (basic and acidic residues); sequence KVVESKEQKQ. The region spanning 504-663 is the C2 1 domain; sequence PGHTPAMSLS…IQSELLSFSS (160 aa). Over residues 698–735 the composition is skewed to polar residues; it reads KLSSSTQPAPVSAATSSDTILPETGQDTACTRNPQSSN. The residue at position 713 (Ser713) is a Phosphoserine. 4 consecutive C2 domains span residues 771 to 903, 969 to 1131, 1155 to 1323, and 1383 to 1517; these read SCNL…SRLL, QPPV…YRED, SSGF…TGWY, and KEEE…TLTI. Basic and acidic residues predominate over residues 1550–1574; the sequence is EPARELDSMDCSSHSESEQHPRKSD. Disordered stretches follow at residues 1550-1599 and 1798-1824; these read EPAR…NSAA and LAHT…AARH. Residues 1584–1599 are compositionally biased toward polar residues; sequence LQTSPTSTQVHGNSAA. A C2 6 domain is found at 1598–1726; that stretch reads AAAQVCPAQE…SGFQFICGWY (129 aa). Phosphoserine is present on Ser1871. Disordered stretches follow at residues 1891–1918, 1952–2013, 2074–2163, 2182–2231, and 2261–2323; these read FSSQ…GRQD, ALTS…GGML, SEVL…SVGW, SEAF…EVST, and SHSP…TEET. Residues 1892 to 1904 show a composition bias toward low complexity; that stretch reads SSQSSPAVSQSQE. Polar residues-rich tracts occupy residues 1952–1965 and 2074–2083; these read ALTS…SRAV and SEVLSPQPTE. Residues 2110–2125 are compositionally biased toward low complexity; it reads AVSPQPAQGSPSQSGV. Polar residues predominate over residues 2147 to 2158; sequence PSLTFSEAQEGS. The span at 2182–2197 shows a compositional bias: low complexity; that stretch reads SEAFSSEFSDSSESFE. Positions 2207 to 2216 are enriched in basic and acidic residues; sequence SKREDYKDSP. Over residues 2222 to 2231 the composition is skewed to polar residues; that stretch reads QVPTGSEVST.

In terms of assembly, interacts with OFD1; OFD1 may act as a negative regulator of C2CD3. Associates with the BBSome complex. Interacts with IFT88, BBS4 and PCM1.

The protein localises to the cytoplasm. It localises to the cytoskeleton. Its subcellular location is the cilium basal body. The protein resides in the microtubule organizing center. It is found in the centrosome. The protein localises to the centriole. Component of the centrioles that acts as a positive regulator of centriole elongation. Promotes assembly of centriolar distal appendage, a structure at the distal end of the mother centriole that acts as an anchor of the cilium, and is required for recruitment of centriolar distal appendages proteins CEP83, SCLT1, CEP89, FBF1 and CEP164. Not required for centriolar satellite integrity or RAB8 activation. Required for primary cilium formation. Required for sonic hedgehog/SHH signaling and for proteolytic processing of GLI3. In Mus musculus (Mouse), this protein is C2 domain-containing protein 3 (C2cd3).